Consider the following 234-residue polypeptide: ATP-dependent dethiobiotin synthetase BioD (234 aa).

ATP is bound at residue 12 to 17 (DVGKTF). Threonine 16 is a binding site for Mg(2+). Residue lysine 37 is part of the active site. A substrate-binding site is contributed by serine 41. ATP-binding positions include aspartate 52, 118-121 (EGAG), and 178-179 (SQ). Mg(2+) contacts are provided by aspartate 52 and glutamate 118.

It belongs to the dethiobiotin synthetase family. Homodimer. Mg(2+) is required as a cofactor.

It is found in the cytoplasm. The enzyme catalyses (7R,8S)-7,8-diammoniononanoate + CO2 + ATP = (4R,5S)-dethiobiotin + ADP + phosphate + 3 H(+). It functions in the pathway cofactor biosynthesis; biotin biosynthesis; biotin from 7,8-diaminononanoate: step 1/2. Its function is as follows. Catalyzes a mechanistically unusual reaction, the ATP-dependent insertion of CO2 between the N7 and N8 nitrogen atoms of 7,8-diaminopelargonic acid (DAPA, also called 7,8-diammoniononanoate) to form a ureido ring. The protein is ATP-dependent dethiobiotin synthetase BioD of Phenylobacterium zucineum (strain HLK1).